Consider the following 413-residue polypeptide: Protein cycle (413 aa).

The tract at residues 1–43 (MEVQEFCENMEEIEDENYDEEKSARTSDENRKQNHSEIEKRRR) is disordered. Residues 8–19 (ENMEEIEDENYD) are compositionally biased toward acidic residues. Residues 20 to 41 (EEKSARTSDENRKQNHSEIEKR) are compositionally biased toward basic and acidic residues. The bHLH domain occupies 30–83 (NRKQNHSEIEKRRRDKMNTYINELSSMIPMCFAMQRKLDKLTVLRMAVQHLRGI). The PAS 1 domain occupies 104 to 175 (DQELKMIILQ…EQLSSLEQCP (72 aa)). Positions 219–242 (NQIKEESDTSSSSRSSTKRKSRLT) are disordered. The region spanning 297 to 367 (PASLDNHPNI…ESHKMVMQVP (71 aa)) is the PAS 2 domain. The PAC domain occupies 372-413 (TQVYRFRCKDNSYIQLQSEWRAFKNPWTSEIDYIIAKNSVFL).

Efficient DNA binding requires dimerization with another bHLH protein. Forms a heterodimer with Clock in order to activate PER and TIM transcription. As to expression, expressed in head and ovary.

It is found in the nucleus. Putative transcription factor involved in the generation of biological rhythms. Activates cycling transcription of Period (PER) and Timeless (TIM) by binding to the E-box (5'-CACGTG-3') present in their promoters. The sequence is that of Protein cycle (cyc) from Drosophila melanogaster (Fruit fly).